Consider the following 437-residue polypeptide: O-antigen export system ATP-binding protein RfbB (437 aa).

Positions 37–256 (LRGKRQSRDA…YREAISLAEA (220 aa)) constitute an ABC transporter domain. Residue 69–76 (GRNGSGKS) participates in ATP binding.

Belongs to the ABC transporter superfamily.

It is found in the cell inner membrane. Its function is as follows. May form an ATP-driven O-antigen export apparatus, in association with RfbA. The polypeptide is O-antigen export system ATP-binding protein RfbB (rfbB) (Myxococcus xanthus).